The primary structure comprises 291 residues: 4-hydroxy-tetrahydrodipicolinate synthase (291 aa).

A pyruvate-binding site is contributed by Thr44. The active-site Proton donor/acceptor is Tyr132. Lys160 serves as the catalytic Schiff-base intermediate with substrate. Ile202 serves as a coordination point for pyruvate.

This sequence belongs to the DapA family. As to quaternary structure, homotetramer; dimer of dimers.

It is found in the cytoplasm. The enzyme catalyses L-aspartate 4-semialdehyde + pyruvate = (2S,4S)-4-hydroxy-2,3,4,5-tetrahydrodipicolinate + H2O + H(+). Its pathway is amino-acid biosynthesis; L-lysine biosynthesis via DAP pathway; (S)-tetrahydrodipicolinate from L-aspartate: step 3/4. Catalyzes the condensation of (S)-aspartate-beta-semialdehyde [(S)-ASA] and pyruvate to 4-hydroxy-tetrahydrodipicolinate (HTPA). The protein is 4-hydroxy-tetrahydrodipicolinate synthase of Zymomonas mobilis subsp. mobilis (strain ATCC 31821 / ZM4 / CP4).